The following is a 285-amino-acid chain: 1-deoxypentalenic acid 11-beta-hydroxylase (285 aa).

R117 is a binding site for substrate. H137 and D139 together coordinate Fe cation. 2-oxoglutarate contacts are provided by residues 137 to 139 (HQD) and W153. Substrate is bound at residue R188. H226 lines the Fe cation pocket. Positions 228 and 240 each coordinate 2-oxoglutarate.

This sequence belongs to the PhyH family. It depends on Fe cation as a cofactor. The cofactor is L-ascorbate.

It carries out the reaction 1-deoxypentalenate + 2-oxoglutarate + O2 = 1-deoxy-11beta-hydroxypentalenate + succinate + CO2. Its pathway is antibiotic biosynthesis; neopentalenolactone biosynthesis. Catalyzes the conversion of 1-deoxypentalenic acid to 11-beta-hydroxy-1-deoxypentalenic acid in the biosynthesis of neopentalenolactone antibiotic. This chain is 1-deoxypentalenic acid 11-beta-hydroxylase (ptlH), found in Streptomyces avermitilis (strain ATCC 31267 / DSM 46492 / JCM 5070 / NBRC 14893 / NCIMB 12804 / NRRL 8165 / MA-4680).